The chain runs to 1994 residues: MGDGGVNAVGEGVNQSHMLFDRFVQATTCKGTLKAFQELCDFLELKPNEYRVFYHKLKSKLNYWKAKALWAKLDKRASHKEYKKGRACANTKCLIIGAGPCGLRTAIELGFLGAKVVLLEKRDAFSRNNVLHLWPFTIQDLRGLGAKKFYGKFCAGAIDHISIRQLQLMLLKVALLLGIEIHVNVEFKGLIEPPEDQENERIGWRAEVHPRTHPVNELEFDVIIGADGRRNTLSGFRRKEFRGKLAIAITANFINRNTTAEAKVEEISGVAFIFNQKFFQDLREATGIDLENIVYYKDDTHYFVMTAKKQSLLEKGVILHDYADTEMLLSRANVDQKALLSYAREAADFSTNHQLPKLDFAINHYGQPDVAMFDFTCMYASENAALVRQRNGHKLLVALVGDSLLEPFWPMGTGIARGFLAAMDSAWMVRSWAHGSSPLEVLAERESIYRLLPQTTPENVSKNFSQYSVDPTTRYPNISLHQVRPNQVRHLLDTGETRDLRVDLENVVNSSTPKLTRNESIVRSSKLLNWCQRQTEGYRGVSVSDLTTSWKSGLALCALIHRYRPDLIDFESLDEKDVEKNNQLAFDVAEREFGISPIMTGKEMSVVVEPDKLSMVMYLSQFYEMFKDTVPPGENQNLSPEEKAALIASTKSPISFLSKLGQSIAISRKRNPKDKKEKELDGLGKRRKTSQAGQSEDEELQRANRDDRPSIATALAERKIDSAAAANNNNKVKSMATQLLAKFEENAPTQSTGLKRQGSFRKEFPQNIGGSDVCFFCRKRVYVMERLSAEGKFFHRSCFKCDYCGTTLRLSSYAFDVEDGKFYCKPHYCYRLSGVAQRKRPAPAAAPANAKEPQVLAVSPNTVDAPGQAITTQTPAERRPSETEVNGVTEPSVAKRLKGTPERIELENYRLSMMREEELEEVPEETLAEHNLSSVLDKATDIEEGSSSSESDMEEEDEDAEAAGPSDLGGVPWKEAVELHAKLKGESDPGADDDGLHDGDGEMDEDEEEEEDEEDEDEEEEEESSEEPCEEDDDPEAEAGSPDFEPGTEIDQEDIPSDAEAEARSRCIDEVVTLPVDNDKTESQGQVFNTAEKTSANPRELIVDVVLSPIQKPALPIEEVHEVSPVVLVKSPGARFFPEPYLPDKVKQNIPPPQSPDVKTPHSPVAQIIALSPICSQPVPQPGTASPKSPVQPQPCACSPTGNPLSPICTQSQPCNEPPSPLSTSSPVRTQPVPAVTSTPLAKPASENRTNEHLKDSTPELKKTDLIEEFWLKSAEIRKSLGLTPLERSKTAVEKSIVKTPTPESSSPKSYTPEDLSEEQKPTFTGRSIIRRINITLEGQVISPVEPKSNGSEKKDLSSSSGLGLNGSVTTSQTAASDSYNNSDSTMLTPPSSPPPPPPREEPACLQNKKSQVSWDNLLEGTEEPKSETMPIKPRTPVSPPQPKQKPVTAPVPTPRTNPPVVMRVKEPNKPRREEVRKSFVECVDEIPFADDVEDTYDDRTPDASGLEKFYTPPTSKVNRDKPPLHLALAMENGKPNIPGVSRTAKGSQHFSPEAKEIAEERMRAREKSVKSQALKDAMAKQLTKMKDSEVAKGAVAKVAWDIPETKGKSKKQSKAQKDSAVKALESKKQADTLPDRFFSTPSSKALDSSVTSSESSTGGKSKKRSSLFSPRKNKKEKKAKNERLSSTEETPPKHKSLWKAVFSGYKKDKKKKDDKSCPSTPSSSTTGDSGKKKDSPLDRSSDLRLRRNLSFSEDSDLSCDDVLERSSQKSKGDSVYVPHALAFKRSYATKKTYTEEELNAKLTRRVQKAARRQAKQEELKRLHRAQMIQRQLEQVEEKQRQLEERGVAVEKALRGEADYWGESNYSEILDLHLGGMGKKDDPKLMQEWFKLVQEKNALVRYESELMIFARELELEDRQSRLQQELRERMAIDDHLKTEEELAEEKQILNEMLEVVEQRDSLVALLEEQRLREKEEDKDLEAVMLSKGFNLNWA.

Residues 2–498 form a monooxygenase domain region; the sequence is GDGGVNAVGE…RHLLDTGETR (497 aa). Residues Cys-101, 101-129, Glu-120, Arg-122, Arg-127, Asn-129, and Asp-402 each bind FAD; that span reads CGLRTAIELGFLGAKVVLLEKRDAFSRNN. The 107-residue stretch at 521 to 627 folds into the Calponin-homology (CH) domain; sequence IVRSSKLLNW…YLSQFYEMFK (107 aa). The segment at 666 to 708 is disordered; it reads ISRKRNPKDKKEKELDGLGKRRKTSQAGQSEDEELQRANRDDR. Positions 674 to 684 are enriched in basic and acidic residues; it reads DKKEKELDGLG. In terms of domain architecture, LIM zinc-binding spans 772-834; that stretch reads DVCFFCRKRV…KPHYCYRLSG (63 aa). Disordered stretches follow at residues 843-900, 917-1064, 1176-1263, 1281-1476, 1493-1555, and 1598-1747; these read PAAA…LKGT, EELE…AEAR, SQPV…ELKK, LGLT…REEV, VEDT…SPEA, and KVAW…LRLR. Composition is skewed to acidic residues over residues 917-926 and 951-961; these read EELEEVPEET and SDMEEEDEDAE. Over residues 975–987 the composition is skewed to basic and acidic residues; it reads EAVELHAKLKGES. Composition is skewed to acidic residues over residues 1001–1037 and 1046–1060; these read GEMDEDEEEEEDEEDEDEEEEEESSEEPCEEDDDPEA and PGTEIDQEDIPSDAE. Residues 1200–1215 are compositionally biased toward polar residues; sequence PTGNPLSPICTQSQPC. 2 stretches are compositionally biased toward basic and acidic residues: residues 1249-1263 and 1287-1297; these read RTNEHLKDSTPELKK and ERSKTAVEKSI. Low complexity-rich tracts occupy residues 1299-1314 and 1358-1368; these read KTPTPESSSPKSYTPE and SSSSGLGLNGS. Positions 1369–1389 are enriched in polar residues; the sequence is VTTSQTAASDSYNNSDSTMLT. Positions 1437–1458 are enriched in pro residues; that stretch reads PVSPPQPKQKPVTAPVPTPRTN. Residues 1464-1476 show a composition bias toward basic and acidic residues; the sequence is RVKEPNKPRREEV. Positions 1616–1635 are enriched in basic and acidic residues; it reads AQKDSAVKALESKKQADTLP. Low complexity predominate over residues 1649-1660; that stretch reads SSVTSSESSTGG. Over residues 1661–1679 the composition is skewed to basic residues; that stretch reads KSKKRSSLFSPRKNKKEKK. The span at 1680-1693 shows a compositional bias: basic and acidic residues; sequence AKNERLSSTEETPP. Residues 1718-1729 are compositionally biased toward low complexity; that stretch reads CPSTPSSSTTGD. Positions 1730–1746 are enriched in basic and acidic residues; that stretch reads SGKKKDSPLDRSSDLRL. Coiled coils occupy residues 1796 to 1855 and 1894 to 1960; these read EEEL…KALR and QEKN…EQRD. Residues 1816 to 1982 form the bMERB domain; the sequence is KQEELKRLHR…EKEEDKDLEA (167 aa).

This sequence belongs to the Mical family. It depends on FAD as a cofactor.

Its subcellular location is the cytoplasm. The protein localises to the cytoskeleton. It is found in the nucleus. The enzyme catalyses L-methionyl-[F-actin] + NADPH + O2 + H(+) = L-methionyl-(R)-S-oxide-[F-actin] + NADP(+) + H2O. Functionally, monooxygenase that promotes depolymerization of F-actin by mediating oxidation of specific methionine residues on actin. Acts by modifying actin subunits through the addition of oxygen to form methionine-sulfoxide, leading to promote actin filament severing and prevent repolymerization. Involved in exocytic vesicles tethering and fusion: the monooxygenase activity is required for this process. The chain is Protein-methionine sulfoxide oxidase mical3a (mical3a) from Danio rerio (Zebrafish).